Reading from the N-terminus, the 467-residue chain is Plasma alpha-L-fucosidase (467 aa).

The N-terminal stretch at 1-28 (MRPQELPRLAFPLLLLLLLLLPPPPCPA) is a signal peptide. 2 N-linked (GlcNAc...) asparagine glycosylation sites follow: asparagine 171 and asparagine 239. Serine 301 bears the Phosphoserine; by FAM20C mark. Residue asparagine 377 is glycosylated (N-linked (GlcNAc...) asparagine).

It belongs to the glycosyl hydrolase 29 family. As to quaternary structure, homotetramer.

The protein localises to the secreted. The catalysed reaction is an alpha-L-fucoside + H2O = L-fucose + an alcohol. In terms of biological role, alpha-L-fucosidase is responsible for hydrolyzing the alpha-1,6-linked fucose joined to the reducing-end N-acetylglucosamine of the carbohydrate moieties of glycoproteins. This chain is Plasma alpha-L-fucosidase (FUCA2), found in Homo sapiens (Human).